A 110-amino-acid chain; its full sequence is Large ribosomal subunit protein uL22 (110 aa).

It belongs to the universal ribosomal protein uL22 family. In terms of assembly, part of the 50S ribosomal subunit.

This protein binds specifically to 23S rRNA; its binding is stimulated by other ribosomal proteins, e.g. L4, L17, and L20. It is important during the early stages of 50S assembly. It makes multiple contacts with different domains of the 23S rRNA in the assembled 50S subunit and ribosome. Functionally, the globular domain of the protein is located near the polypeptide exit tunnel on the outside of the subunit, while an extended beta-hairpin is found that lines the wall of the exit tunnel in the center of the 70S ribosome. This is Large ribosomal subunit protein uL22 from Alkaliphilus oremlandii (strain OhILAs) (Clostridium oremlandii (strain OhILAs)).